Here is an 853-residue protein sequence, read N- to C-terminus: Ion channel CASTOR (853 aa).

Over residues 1 to 30 the composition is skewed to low complexity; sequence MSLDSEVSVSSSSGRDWFFPSPSFFRSSPS. The interval 1–55 is disordered; that stretch reads MSLDSEVSVSSSSGRDWFFPSPSFFRSSPSQYGRRFHTNSNTHSAPSSTYPSGIR. Residues 38 to 51 show a composition bias toward polar residues; it reads TNSNTHSAPSSTYP. Residues 96 to 116 traverse the membrane as a helical segment; it reads QFGLQFALVTLTIVFLLLLLL. Residues 117–137 adopt a coiled-coil conformation; sequence RNTHLESQVNKLQGEILRLHA. A run of 3 helical transmembrane segments spans residues 168 to 188, 227 to 247, and 279 to 299; these read NLAL…FKYI, LVLL…LFGV, and LVAV…LGLV. RCK N-terminal domains are found at residues 320–461 and 580–752; these read QNHT…ETVV and PERI…DYVL.

The protein belongs to the castor/pollux (TC 1.A.1.23) family. As to quaternary structure, homooligomer. In terms of tissue distribution, expressed in infected and uninfected roots, leaves, seed pods, and flower buds.

It is found in the nucleus membrane. Its function is as follows. Ion channel with a moderate preference for potassium over sodium and calcium. Involved in perinuclear calcium spiking but not in cytosolic calcium influx. Closed at negative voltages in presence of magnesium. Required for early signal transduction events leading to endosymbiosis. Acts early in a signal transduction chain leading from the perception of Nod factor to the activation of calcium spiking. Also involved in fungal entry into root epidermal cells during the establishment of the arbuscular mycorrhizal symbiosis. The protein is Ion channel CASTOR (CASTOR) of Lotus japonicus (Lotus corniculatus var. japonicus).